Here is a 396-residue protein sequence, read N- to C-terminus: MTTNTVSRKVAWLRVVTLAVAAFIFNTTEFVPVGLLSDIAQSFHMQTAQVGIMLTIYAWVVALMSLPFMLMTSQVERRKLLICLFVVFIASHVLSFLSWSFTVLVISRIGVAFAHAIFWSITASLAIRMAPAGKRAQALSLIATGTALAMVLGLPLGRIVGQYFGWRMTFFAIGIGALVTLLCLIKLLPLLPSEHSGSLKSLPLLFRRPALMSIYLLTVVVVTAHYTAYSYIEPFVQNIAGFSANFATALLLLLGGAGIIGSVIFGKLGNQYASALVSTAIALLLVCLALLLPAANSEIHLGVLSIFWGIAMMIIGLGMQVKVLALAPDATDVAMALFSGIFNIGIGAGALVGNQVSLHWSMSMIGYVGAVPAFAALIWSIIIFRRWPVTLEEQTQ.

Residues 1 to 14 (MTTNTVSRKVAWLR) are Cytoplasmic-facing. A helical transmembrane segment spans residues 15–35 (VVTLAVAAFIFNTTEFVPVGL). At 36 to 49 (LSDIAQSFHMQTAQ) the chain is on the periplasmic side. The helical transmembrane segment at 50–70 (VGIMLTIYAWVVALMSLPFML) threads the bilayer. The Cytoplasmic portion of the chain corresponds to 71–80 (MTSQVERRKL). A helical membrane pass occupies residues 81–101 (LICLFVVFIASHVLSFLSWSF). Position 102 (T102) is a topological domain, periplasmic. A helical transmembrane segment spans residues 103-123 (VLVISRIGVAFAHAIFWSITA). The Cytoplasmic portion of the chain corresponds to 124-135 (SLAIRMAPAGKR). The helical transmembrane segment at 136 to 156 (AQALSLIATGTALAMVLGLPL) threads the bilayer. Topologically, residues 157 to 169 (GRIVGQYFGWRMT) are periplasmic. Residues 170–190 (FFAIGIGALVTLLCLIKLLPL) traverse the membrane as a helical segment. Over 191–208 (LPSEHSGSLKSLPLLFRR) the chain is Cytoplasmic. The chain crosses the membrane as a helical span at residues 209-229 (PALMSIYLLTVVVVTAHYTAY). Topologically, residues 230–245 (SYIEPFVQNIAGFSAN) are periplasmic. A helical membrane pass occupies residues 246-266 (FATALLLLLGGAGIIGSVIFG). Residues 267–274 (KLGNQYAS) lie on the Cytoplasmic side of the membrane. Residues 275–295 (ALVSTAIALLLVCLALLLPAA) form a helical membrane-spanning segment. The Periplasmic portion of the chain corresponds to 296 to 298 (NSE). The chain crosses the membrane as a helical span at residues 299–319 (IHLGVLSIFWGIAMMIIGLGM). Over 320–332 (QVKVLALAPDATD) the chain is Cytoplasmic. A helical membrane pass occupies residues 333–353 (VAMALFSGIFNIGIGAGALVG). The Periplasmic portion of the chain corresponds to 354-363 (NQVSLHWSMS). A helical transmembrane segment spans residues 364 to 384 (MIGYVGAVPAFAALIWSIIIF). Topologically, residues 385 to 396 (RRWPVTLEEQTQ) are cytoplasmic.

It belongs to the major facilitator superfamily. SotB (TC 2.A.1.2) family.

It localises to the cell inner membrane. Involved in the efflux of sugars. The physiological role may be the reduction of the intracellular concentration of toxic sugars or sugar metabolites. This chain is Probable sugar efflux transporter, found in Shigella flexneri.